The primary structure comprises 235 residues: Rab-like protein 3 (235 aa).

The segment at 1–235 (MASLDRVKVL…GGNFKSLHYD (235 aa)) is small GTPase-like. GTP is bound by residues 16–21 (GVGKSS), 148–150 (KLD), and 179–180 (DC).

This sequence belongs to the small GTPase superfamily. Rab family. In terms of assembly, homodimer.

Functionally, required for KRAS signaling regulation and modulation of cell proliferation. Regulator of KRAS prenylation, and probably prenylation of other small GTPases. Required for lymphocyte development and function. Not required for myeloid cell development. In Xenopus laevis (African clawed frog), this protein is Rab-like protein 3 (rabl3).